A 921-amino-acid chain; its full sequence is cGMP-dependent 3',5'-cyclic phosphodiesterase (921 aa).

Met1 is modified (N-acetylmethionine). Disordered stretches follow at residues 1-21 and 177-198; these read MRRQ…PPGS and ESSV…DQKG. Residues 177–188 show a composition bias toward polar residues; the sequence is ESSVAPEATQNP. GAF domains lie at 220–357 and 389–528; these read DASS…STVL and DVSV…GISI. 5 residues coordinate 3',5'-cyclic GMP: Ser411, Asp426, Ile445, Tyr468, and Thr479. A PDEase domain is found at 558 to 882; that stretch reads SDDEYTKLLH…EHWTKVSHKF (325 aa). Catalysis depends on His636, which acts as the Proton donor. Zn(2+) is bound by residues His640, His676, Asp677, and Asp788. Asp677 serves as a coordination point for Mg(2+).

This sequence belongs to the cyclic nucleotide phosphodiesterase family. PDE2 subfamily. In terms of assembly, homodimer. It depends on Zn(2+) as a cofactor. The cofactor is Mg(2+).

The protein resides in the cell membrane. It localises to the cytoplasm. It is found in the mitochondrion. The protein localises to the mitochondrion inner membrane. Its subcellular location is the mitochondrion outer membrane. The enzyme catalyses a nucleoside 3',5'-cyclic phosphate + H2O = a nucleoside 5'-phosphate + H(+). It catalyses the reaction 3',5'-cyclic GMP + H2O = GMP + H(+). It carries out the reaction 3',5'-cyclic AMP + H2O = AMP + H(+). Its activity is regulated as follows. The 3',5'-cyclic-AMP phosphodiesterase activity is stimulated by 3',5'-cyclic GMP. Functionally, cGMP-activated cyclic nucleotide phosphodiesterase with a dual-specificity for the second messengers cAMP and cGMP, which are key regulators of many important physiological processes. Has a higher efficiency with cGMP compared to cAMP. Plays a role in cell growth and migration. In terms of biological role, regulates mitochondrial cAMP levels and respiration. Involved in the regulation of mitochondria morphology/dynamics and apoptotic cell death via local modulation of cAMP/PKA signaling in the mitochondrion, including the monitoring of local cAMP levels at the outer mitochondrial membrane and of PKA-dependent phosphorylation of DNM1L. This is cGMP-dependent 3',5'-cyclic phosphodiesterase from Bos taurus (Bovine).